Reading from the N-terminus, the 319-residue chain is tRNA uridine(34) hydroxylase (319 aa).

The Rhodanese domain maps to 133 to 231; it reads EDPDSVVIDT…YLEDVSSENS (99 aa). Cys-191 functions as the Cysteine persulfide intermediate in the catalytic mechanism.

This sequence belongs to the TrhO family.

It catalyses the reaction uridine(34) in tRNA + AH2 + O2 = 5-hydroxyuridine(34) in tRNA + A + H2O. Its function is as follows. Catalyzes oxygen-dependent 5-hydroxyuridine (ho5U) modification at position 34 in tRNAs. The sequence is that of tRNA uridine(34) hydroxylase from Prochlorococcus marinus (strain NATL1A).